The chain runs to 290 residues: UPF0761 membrane protein ASA_4118 (290 aa).

The next 6 helical transmembrane spans lie at 48 to 68 (LLSLVPMIAVVFGMMSAFPVF), 104 to 124 (NTTAVGIGALIVVALMLISAI), 144 to 164 (FAMYWMILTLGPVLIGGSIAI), 182 to 202 (IGYLLLRSLPFLFSVLTFLLV), 216 to 236 (AFIGALVAATLFELAKRGFAI), and 250 to 270 (ALATIPVLFVWVYLSWLVVLL).

The protein belongs to the UPF0761 family.

It localises to the cell inner membrane. This chain is UPF0761 membrane protein ASA_4118, found in Aeromonas salmonicida (strain A449).